The sequence spans 215 residues: 3-demethoxyubiquinol 3-hydroxylase (215 aa).

6 residues coordinate Fe cation: Glu-64, Glu-94, His-97, Glu-146, Glu-178, and His-181.

This sequence belongs to the COQ7 family. Fe cation is required as a cofactor.

It localises to the cell membrane. The enzyme catalyses a 5-methoxy-2-methyl-3-(all-trans-polyprenyl)benzene-1,4-diol + AH2 + O2 = a 3-demethylubiquinol + A + H2O. It participates in cofactor biosynthesis; ubiquinone biosynthesis. In terms of biological role, catalyzes the hydroxylation of 2-nonaprenyl-3-methyl-6-methoxy-1,4-benzoquinol during ubiquinone biosynthesis. The sequence is that of 3-demethoxyubiquinol 3-hydroxylase from Pseudomonas fluorescens (strain SBW25).